We begin with the raw amino-acid sequence, 490 residues long: Betaine aldehyde dehydrogenase (490 aa).

K(+) contacts are provided by T26, I27, and D93. 150 to 152 is a binding site for NAD(+); sequence GAW. Residue K162 is the Charge relay system of the active site. 176–179 serves as a coordination point for NAD(+); that stretch reads KPSE. V180 contacts K(+). 230-233 lines the NAD(+) pocket; sequence GVAS. Residue L246 coordinates K(+). E252 acts as the Proton acceptor in catalysis. 3 residues coordinate NAD(+): G254, C286, and E387. C286 acts as the Nucleophile in catalysis. Position 286 is a cysteine sulfenic acid (-SOH) (C286). K(+)-binding residues include K457 and G460. E464 functions as the Charge relay system in the catalytic mechanism.

This sequence belongs to the aldehyde dehydrogenase family. Dimer of dimers. It depends on K(+) as a cofactor.

It carries out the reaction betaine aldehyde + NAD(+) + H2O = glycine betaine + NADH + 2 H(+). It participates in amine and polyamine biosynthesis; betaine biosynthesis via choline pathway; betaine from betaine aldehyde: step 1/1. Involved in the biosynthesis of the osmoprotectant glycine betaine. Catalyzes the irreversible oxidation of betaine aldehyde to the corresponding acid. The protein is Betaine aldehyde dehydrogenase of Escherichia coli (strain SE11).